A 763-amino-acid polypeptide reads, in one-letter code: Phosphoglycerol transferase I (763 aa).

A run of 4 helical transmembrane segments spans residues 1 to 21 (MSEL…AWKA), 26 to 46 (WWFA…ITLF), 77 to 97 (ILPG…LGWI), and 108 to 128 (FGYS…SPAF).

It belongs to the OpgB family.

The protein localises to the cell inner membrane. It carries out the reaction a phosphatidylglycerol + a membrane-derived-oligosaccharide D-glucose = a 1,2-diacyl-sn-glycerol + a membrane-derived-oligosaccharide 6-(glycerophospho)-D-glucose.. Its pathway is glycan metabolism; osmoregulated periplasmic glucan (OPG) biosynthesis. In terms of biological role, transfers a phosphoglycerol residue from phosphatidylglycerol to the membrane-bound nascent glucan backbones. In Escherichia coli (strain ATCC 8739 / DSM 1576 / NBRC 3972 / NCIMB 8545 / WDCM 00012 / Crooks), this protein is Phosphoglycerol transferase I.